The sequence spans 496 residues: Adenosine transporter 1 (496 aa).

At 1–26 (MSSHTSTPNHASAAPPRKWYDMTSAE) the chain is on the cytoplasmic side. The chain crosses the membrane as a helical span at residues 27-47 (FYVYVVAFMCGISMLMPINAV). The Extracellular portion of the chain corresponds to 48–77 (FSAPSYMLQYYLYATKDPNHVPQMTNFWSN). Residues 78–98 (VMTYYNLIGLVTGLVMEPLTL) traverse the membrane as a helical segment. Over 99-107 (LKSFRKIPM) the chain is Cytoplasmic. Residues 108 to 128 (LVRLLGGLCILIVEIIVLMAV) traverse the membrane as a helical segment. Over 129 to 135 (PARGTTE) the chain is Extracellular. Residues 136 to 156 (GGAVATMCIAGFIGGLGKSIF) traverse the membrane as a helical segment. Residues 157 to 172 (ESTVYGMFGAFPPSFT) are Cytoplasmic-facing. A helical transmembrane segment spans residues 173-193 (SIMMGGVGISGVLTSLIQIIV). Residues 194 to 208 (KAALPDTYEGVKKQS) lie on the Extracellular side of the membrane. The helical transmembrane segment at 209-229 (YIYYSLDVGIQAATFIALIMM) threads the bilayer. At 230–336 (RFNSFAQLHF…SIISVLRSIK (107 aa)) the chain is on the cytoplasmic side. The helical transmembrane segment at 337–357 (WMFVSCAFVFVVTLFLFPGIA) threads the bilayer. Residues 358-365 (TGMFPESK) lie on the Extracellular side of the membrane. Residues 366-386 (WFATVAVFIFNCCDVLGRVAP) form a helical membrane-spanning segment. The Cytoplasmic portion of the chain corresponds to 387–399 (ALRFMWPRSYNQR). A helical membrane pass occupies residues 400–420 (WIIVAASFARVIFVPLLLLYS). At 421–431 (YHYIPSEAYGY) the chain is on the extracellular side. A helical membrane pass occupies residues 432-452 (VIMVIFGFSSGYVASMSLTLG). At 453–464 (PQSKGIDNDGKR) the chain is on the cytoplasmic side. The chain crosses the membrane as a helical span at residues 465 to 485 (FVAGTLMGISILVGGTIGTVL). At 486–496 (SIMTQTIREKY) the chain is on the extracellular side.

This sequence belongs to the SLC29A/ENT transporter (TC 2.A.57) family.

The protein localises to the membrane. It catalyses the reaction adenosine(in) = adenosine(out). Its function is as follows. Adenosine transporter. In Crithidia fasciculata, this protein is Adenosine transporter 1.